The chain runs to 1902 residues: PII-type proteinase (1902 aa).

A signal peptide spans 1–33; the sequence is MQRKKKGLSILLAGTVALGALAVLPVGEIQAKA. Residues 34–187 constitute a propeptide that is removed on maturation; it reads AISQQTKVSS…VTLAKVYYPT (154 aa). A Peptidase S8 domain is found at 191–697; it reads ANSMANVQAV…AGLVDVKAAI (507 aa). Active-site charge relay system residues include D217, H281, and S620. Positions 1793–1805 are enriched in low complexity; it reads KTAGKGDDTTGTS. Residues 1793 to 1872 are disordered; that stretch reads KTAGKGDDTT…GKGALPKTAE (80 aa). Positions 1867 to 1871 match the LPXTG sorting signal motif; sequence LPKTA. T1870 bears the Pentaglycyl murein peptidoglycan amidated threonine mark. Positions 1871-1902 are cleaved as a propeptide — removed by sortase; it reads AETTERPAFGFLGVIVVSLMGVLGLKRKQREE.

The protein belongs to the peptidase S8 family.

Its subcellular location is the secreted. It localises to the cell wall. It carries out the reaction Endopeptidase activity with very broad specificity, although some subsite preference have been noted, e.g. large hydrophobic residues in the P1 and P4 positions, and Pro in the P2 position. Best known for its action on caseins, although it has been shown to hydrolyze hemoglobin and oxidized insulin B-chain.. Protease which breaks down milk proteins during the growth of the bacteria on milk. This chain is PII-type proteinase (prtP), found in Lacticaseibacillus paracasei (Lactobacillus paracasei).